We begin with the raw amino-acid sequence, 163 residues long: Pheromone-binding protein (163 aa).

The N-terminal stretch at 1 to 21 (MLRKISLLLLPVFVAINLVHS) is a signal peptide. Intrachain disulfides connect Cys40–Cys75, Cys71–Cys129, and Cys118–Cys138.

Belongs to the PBP/GOBP family. As to quaternary structure, homodimer. Antenna.

This major soluble protein in olfactory sensilla of male moths might serve to solubilize the extremely hydrophobic pheromone molecules and to transport pheromone through the aqueous lymph to receptors located on olfactory cilia. The chain is Pheromone-binding protein from Antheraea polyphemus (Polyphemus moth).